Here is a 101-residue protein sequence, read N- to C-terminus: Urease subunit beta 1 (101 aa).

Belongs to the urease beta subunit family. As to quaternary structure, heterotrimer of UreA (gamma), UreB (beta) and UreC (alpha) subunits. Three heterotrimers associate to form the active enzyme.

The protein localises to the cytoplasm. The enzyme catalyses urea + 2 H2O + H(+) = hydrogencarbonate + 2 NH4(+). The protein operates within nitrogen metabolism; urea degradation; CO(2) and NH(3) from urea (urease route): step 1/1. Functionally, disruption of the ure1 gene cluster suggests that it protects brucellae during their passage through the stomach. The major route of infection in human brucellosis is oral. This chain is Urease subunit beta 1, found in Brucella abortus (strain 2308).